Here is a 499-residue protein sequence, read N- to C-terminus: Dual specificity protein kinase CLK2 (499 aa).

Residues 1–65 (MPHPRRYHSS…RSSYDDHSSD (65 aa)) are disordered. Positions 8–23 (HSSERGSRGSYHEHYQ) are enriched in basic and acidic residues. The span at 24–33 (SRKHKRRRSR) shows a compositional bias: basic residues. Ser-34 carries the post-translational modification Phosphoserine; by PKB/AKT1. Positions 47–65 (REDSYHVRSRSSYDDHSSD) are enriched in basic and acidic residues. The residue at position 98 (Ser-98) is a Phosphoserine; by autocatalysis. Tyr-99 carries the post-translational modification Phosphotyrosine; by autocatalysis. Positions 102-142 (HRENSSYRSQRSSRRKHRRRRRRSRTFSRSSSHSSRRAKSV) are disordered. The segment covering 112–127 (RSSRRKHRRRRRRSRT) has biased composition (basic residues). Residue Thr-127 is modified to Phosphothreonine; by PKB/AKT1. At Ser-141 the chain carries Phosphoserine; by autocatalysis. A Phosphotyrosine modification is found at Tyr-152. The Protein kinase domain maps to 163-479 (EIVSTLGEGT…GEALQHPFFA (317 aa)). ATP contacts are provided by residues 168-176 (LGEGTFGRV) and Lys-192. Asp-289 serves as the catalytic Proton acceptor. Phosphothreonine; by PKB/AKT2 is present on Thr-343.

The protein belongs to the protein kinase superfamily. CMGC Ser/Thr protein kinase family. Lammer subfamily. As to quaternary structure, interacts with RBMX and UBL5. Interacts with AKT1. In terms of processing, autophosphorylates on all three types of residues. Phosphorylation on Ser-34 and Thr-127 by AKT1 is induced by ionizing radiation or insulin. Phosphorylation plays a critical role in cell proliferation following low dose radiation and prevents cell death following high dose radiation. Phosphorylation at Thr-343 by PKB/AKT2 induces its kinase activity which is required for its stability. The phosphorylation status at Ser-141 influences its subnuclear localization; inhibition of phosphorylation at Ser-141 results in accumulation in the nuclear speckle.

The protein resides in the nucleus. Its subcellular location is the nucleus speckle. It carries out the reaction L-seryl-[protein] + ATP = O-phospho-L-seryl-[protein] + ADP + H(+). The catalysed reaction is L-threonyl-[protein] + ATP = O-phospho-L-threonyl-[protein] + ADP + H(+). It catalyses the reaction L-tyrosyl-[protein] + ATP = O-phospho-L-tyrosyl-[protein] + ADP + H(+). 5,6-dichloro-1-b-D-ribofuranosylbenzimidazole (DRB) inhibits autophosphorylation. TG003 inhibits its kinase activity and affects the regulation of alternative splicing mediated by phosphorylation of SR proteins. In terms of biological role, dual specificity kinase acting on both serine/threonine and tyrosine-containing substrates. Phosphorylates serine- and arginine-rich (SR) proteins of the spliceosomal complex. May be a constituent of a network of regulatory mechanisms that enable SR proteins to control RNA splicing and can cause redistribution of SR proteins from speckles to a diffuse nucleoplasmic distribution. Acts as a suppressor of hepatic gluconeogenesis and glucose output by repressing PPARGC1A transcriptional activity on gluconeogenic genes via its phosphorylation. Phosphorylates PPP2R5B thereby stimulating the assembly of PP2A phosphatase with the PPP2R5B-AKT1 complex leading to dephosphorylation of AKT1. Phosphorylates: PTPN1, SRSF1 and SRSF3. Regulates the alternative splicing of tissue factor (F3) pre-mRNA in endothelial cells. Phosphorylates PAGE4 at several serine and threonine residues and this phosphorylation attenuates the ability of PAGE4 to potentiate the transcriptional activator activity of JUN. The protein is Dual specificity protein kinase CLK2 (Clk2) of Mus musculus (Mouse).